Consider the following 282-residue polypeptide: MTLFEAIVLGIVQGLTEFLPISSTAHLRIIPALAGWEDPGAAFTAIVQIGTLVAVLLYFWKDIFIIVAAVIEGIVQRKPLENSDAKMGWMIVAGTIPIVIFGKLFETQIDTTLRSLYWISGSLIGLAIILFLAEGKIKNRIKKELPLKAMENIGWKEALLIGLAQSIALIPGSSRSGVTITGGLFLNLDRATAARFSFLLSLPAVFAAGLYKLYQTWDIIVASPEHITNILVATLVAGIVGYASIAFLLNYLKKHTTTIFIAYRLVAGTAILYLVATGVLQP.

6 consecutive transmembrane segments (helical) span residues 51-71, 87-107, 115-135, 191-211, 229-249, and 259-279; these read TLVA…AAVI, MGWM…LFET, SLYW…LAEG, ATAA…AGLY, NILV…AFLL, and IFIA…ATGV.

This sequence belongs to the UppP family.

Its subcellular location is the cell inner membrane. The enzyme catalyses di-trans,octa-cis-undecaprenyl diphosphate + H2O = di-trans,octa-cis-undecaprenyl phosphate + phosphate + H(+). In terms of biological role, catalyzes the dephosphorylation of undecaprenyl diphosphate (UPP). Confers resistance to bacitracin. This is Undecaprenyl-diphosphatase from Pelodictyon phaeoclathratiforme (strain DSM 5477 / BU-1).